The chain runs to 441 residues: Amino-acid acetyltransferase (441 aa).

One can recognise an N-acetyltransferase domain in the interval 295–434 (EKVRGAGIDD…KALYNFQRRS (140 aa)).

The protein belongs to the acetyltransferase family. ArgA subfamily.

It localises to the cytoplasm. The catalysed reaction is L-glutamate + acetyl-CoA = N-acetyl-L-glutamate + CoA + H(+). The protein operates within amino-acid biosynthesis; L-arginine biosynthesis; N(2)-acetyl-L-ornithine from L-glutamate: step 1/4. The sequence is that of Amino-acid acetyltransferase from Photobacterium profundum (strain SS9).